The primary structure comprises 341 residues: MSSAAMVKAEDSLEPTLQNLLDQKTLRWVFVGGKGGVGKTTTSCSLAIQLAKVRKSVLLISTDPAHNLSDAFGQKFGKEARLIDGFTNLSAMEIDPNGSIQDLLAAGGGQGDDSMGGLGIGGMMQDLAFSIPGVDEAMSFAEVLKQVKSLSYEVIIFDTAPTGHTLRFLQFPTVLEKALAKLAQLSTQFGPMLNSILGGRGGLPGGQNLDEILSKMESLRETIAEVNAQFKDADLTTFVCVCIAEFLSLYETERMIQELTSYHIDTHCIVVNQLLFPGKDSSCEQCKARRKMQKKYLNEIEELYEDFNVVRMPMLVEEVRGKEKLEKFSDMLIHPYVPPQE.

Position 34 to 41 (34 to 41 (KGGVGKTT)) interacts with ATP. Residue aspartate 63 is part of the active site. The ATP site is built by glutamate 245 and asparagine 272. Residues cysteine 283 and cysteine 286 each contribute to the Zn(2+) site.

Belongs to the arsA ATPase family. In terms of assembly, homodimer.

It is found in the cytoplasm. Its subcellular location is the endoplasmic reticulum. Its function is as follows. ATPase required for the post-translational delivery of tail-anchored (TA) proteins to the endoplasmic reticulum. Recognizes and selectively binds the transmembrane domain of TA proteins in the cytosol. This complex then targets to the endoplasmic reticulum by membrane-bound receptors, where the tail-anchored protein is released for insertion. This process is regulated by ATP binding and hydrolysis. ATP binding drives the homodimer towards the closed dimer state, facilitating recognition of newly synthesized TA membrane proteins. ATP hydrolysis is required for insertion. Subsequently, the homodimer reverts towards the open dimer state, lowering its affinity for the membrane-bound receptor, and returning it to the cytosol to initiate a new round of targeting. This Paracoccidioides brasiliensis (strain Pb18) protein is ATPase GET3.